The following is a 347-amino-acid chain: Uroporphyrinogen decarboxylase (347 aa).

Substrate-binding positions include 24–28 (RQAGR), phenylalanine 42, aspartate 73, tyrosine 150, threonine 205, and histidine 320.

The protein belongs to the uroporphyrinogen decarboxylase family. Homodimer.

The protein resides in the cytoplasm. It catalyses the reaction uroporphyrinogen III + 4 H(+) = coproporphyrinogen III + 4 CO2. It participates in porphyrin-containing compound metabolism; protoporphyrin-IX biosynthesis; coproporphyrinogen-III from 5-aminolevulinate: step 4/4. In terms of biological role, catalyzes the decarboxylation of four acetate groups of uroporphyrinogen-III to yield coproporphyrinogen-III. The sequence is that of Uroporphyrinogen decarboxylase from Gloeobacter violaceus (strain ATCC 29082 / PCC 7421).